Consider the following 1198-residue polypeptide: DNA polymerase II large subunit (1198 aa).

Disordered stretches follow at residues 281–332 and 534–553; these read YKTG…PQKK and HWAE…AAES. Positions 286 to 319 are enriched in acidic residues; the sequence is DTDEADADSDDGTDEDAADDSDIDDSSAGDEEAD.

Belongs to the archaeal DNA polymerase II family. Heterodimer of a large subunit and a small subunit.

The enzyme catalyses DNA(n) + a 2'-deoxyribonucleoside 5'-triphosphate = DNA(n+1) + diphosphate. It carries out the reaction Exonucleolytic cleavage in the 3'- to 5'-direction to yield nucleoside 5'-phosphates.. Possesses two activities: a DNA synthesis (polymerase) and an exonucleolytic activity that degrades single-stranded DNA in the 3'- to 5'-direction. Has a template-primer preference which is characteristic of a replicative DNA polymerase. The polypeptide is DNA polymerase II large subunit (Natronomonas pharaonis (strain ATCC 35678 / DSM 2160 / CIP 103997 / JCM 8858 / NBRC 14720 / NCIMB 2260 / Gabara) (Halobacterium pharaonis)).